Reading from the N-terminus, the 264-residue chain is Acyl-[acyl-carrier-protein]--UDP-N-acetylglucosamine O-acyltransferase (264 aa).

Belongs to the transferase hexapeptide repeat family. LpxA subfamily. Homotrimer.

It is found in the cytoplasm. It carries out the reaction a (3R)-hydroxyacyl-[ACP] + UDP-N-acetyl-alpha-D-glucosamine = a UDP-3-O-[(3R)-3-hydroxyacyl]-N-acetyl-alpha-D-glucosamine + holo-[ACP]. Its pathway is glycolipid biosynthesis; lipid IV(A) biosynthesis; lipid IV(A) from (3R)-3-hydroxytetradecanoyl-[acyl-carrier-protein] and UDP-N-acetyl-alpha-D-glucosamine: step 1/6. In terms of biological role, involved in the biosynthesis of lipid A, a phosphorylated glycolipid that anchors the lipopolysaccharide to the outer membrane of the cell. This is Acyl-[acyl-carrier-protein]--UDP-N-acetylglucosamine O-acyltransferase from Chlorobaculum tepidum (strain ATCC 49652 / DSM 12025 / NBRC 103806 / TLS) (Chlorobium tepidum).